Consider the following 266-residue polypeptide: ATP synthase subunit a (266 aa).

The next 5 helical transmembrane spans lie at 28–48, 88–108, 141–161, 206–226, and 237–257; these read SINV…LVIF, LIAP…MMDL, DVNI…FYSI, LFGN…LLPW, and AIFH…LTVV.

Belongs to the ATPase A chain family. F-type ATPases have 2 components, CF(1) - the catalytic core - and CF(0) - the membrane proton channel. CF(1) has five subunits: alpha(3), beta(3), gamma(1), delta(1), epsilon(1). CF(0) has three main subunits: a(1), b(2) and c(9-12). The alpha and beta chains form an alternating ring which encloses part of the gamma chain. CF(1) is attached to CF(0) by a central stalk formed by the gamma and epsilon chains, while a peripheral stalk is formed by the delta and b chains.

The protein localises to the cell inner membrane. In terms of biological role, key component of the proton channel; it plays a direct role in the translocation of protons across the membrane. In Pectobacterium atrosepticum (strain SCRI 1043 / ATCC BAA-672) (Erwinia carotovora subsp. atroseptica), this protein is ATP synthase subunit a.